A 267-amino-acid polypeptide reads, in one-letter code: 4-hydroxy-tetrahydrodipicolinate reductase (267 aa).

NAD(+) is bound by residues 8–13 and Glu34; that span reads GAAGRM. Residue Arg35 participates in NADP(+) binding. Residues 98–100 and 122–125 each bind NAD(+); these read GST and APNM. His155 acts as the Proton donor/acceptor in catalysis. (S)-2,3,4,5-tetrahydrodipicolinate is bound at residue His156. Residue Lys159 is the Proton donor of the active site. 165-166 provides a ligand contact to (S)-2,3,4,5-tetrahydrodipicolinate; that stretch reads GT.

Belongs to the DapB family.

Its subcellular location is the cytoplasm. It carries out the reaction (S)-2,3,4,5-tetrahydrodipicolinate + NAD(+) + H2O = (2S,4S)-4-hydroxy-2,3,4,5-tetrahydrodipicolinate + NADH + H(+). The enzyme catalyses (S)-2,3,4,5-tetrahydrodipicolinate + NADP(+) + H2O = (2S,4S)-4-hydroxy-2,3,4,5-tetrahydrodipicolinate + NADPH + H(+). Its pathway is amino-acid biosynthesis; L-lysine biosynthesis via DAP pathway; (S)-tetrahydrodipicolinate from L-aspartate: step 4/4. Its function is as follows. Catalyzes the conversion of 4-hydroxy-tetrahydrodipicolinate (HTPA) to tetrahydrodipicolinate. The sequence is that of 4-hydroxy-tetrahydrodipicolinate reductase from Citrifermentans bemidjiense (strain ATCC BAA-1014 / DSM 16622 / JCM 12645 / Bem) (Geobacter bemidjiensis).